Consider the following 344-residue polypeptide: KRR1 small subunit processome component homolog (344 aa).

A KH domain is found at 125–193 (DIIKIGNLVH…VRDIVLETMN (69 aa)). Over residues 232-245 (NISKRKQPKVKKQK) the composition is skewed to basic residues. 2 disordered regions span residues 232-260 (NISK…ESKV) and 273-326 (QEQK…TKVD). A coiled-coil region spans residues 270–295 (FLNQEQKQAKRNQGRTEKQKEAAKRQ). Basic and acidic residues-rich tracts occupy residues 283–302 (GRTE…RNKD) and 315–326 (RKKEDGSSTKVD).

This sequence belongs to the KRR1 family. As to quaternary structure, monomer. Component of the ribosomal small subunit (SSU) processome.

It is found in the nucleus. Its subcellular location is the nucleolus. Functionally, required for 40S ribosome biogenesis. Involved in nucleolar processing of pre-18S ribosomal RNA and ribosome assembly. Binds to RNA. Required for female germline development, cell viability during eye development and for survival of dividing cells and epithelial cells during early wing disk development. The polypeptide is KRR1 small subunit processome component homolog (Drosophila yakuba (Fruit fly)).